A 456-amino-acid chain; its full sequence is Acyl-CoA transferase FPSE_08120 (456 aa).

Residues methionine 1–alanine 33 constitute a mitochondrion transit peptide.

The protein belongs to the CoA-transferase III family.

It localises to the mitochondrion. In terms of biological role, acyl-CoA transferase; part of the Fusarium detoxification of benzoxazolinone cluster involved in the degradation of benzoxazolinones produced by the host plant. Maize, wheat, and rye produce the 2 benzoxazinone phytoanticipins 2,4-dihy-droxy-7-methoxy-1,4-benzoxazin-3-one (DIMBOA) and 2,4-dihydroxy-1,4-benzoxazin-3-one (DIBOA) that, due to their inherent instability once released, spontaneously degrade to the more stable corresponding benzoxazolinones, 6-methoxy-2-benzoxazolinone (MBOA) and 2-benzoxazolinone (BOA), respectively. The first step in the detoxification of benzoxazolinones involves the hydrolysis of the cyclic ester bond of benzoxazolinones by the gamma-lactamase FDB1 to aminophenols. FDB1 is able to convert 2-benzoxazolinone (BOA) into 2-aminophenol (2-AP), as well as 6-methoxy-2-benzoxazolinone (MBOA) into 5-methoxy-2-aminophenol (2-AMP). The N-malonyltransferase FDB2 then metabolizes aminophenols via N-malonylation to non-toxic malonamic acids. FDB2 converts 2-AP into N-(2-hydroxyphenyl) malonamic acid (HPMA) and 2-AMP into N-(2-hydroxy-4-methoxyphenyl) malonamic acid (HMPMA). The cluster also contains 2 transcription factors (FDB3 and FPSE_08121), an aldo-keto reductase (FPSE_08125) that possibly associates with a ketone component of BOA and MBOA degradation, an esterase (FPSE_08126), an acyl-CoA transferase (FPSE_08120), a solute carrier protein (FPSE_08119) and a transmembrane transporter (FPSE_08127) proposed to shuttle metabolites of benzoxazolinone degradation. This Fusarium pseudograminearum (strain CS3096) (Wheat and barley crown-rot fungus) protein is Acyl-CoA transferase FPSE_08120.